Here is a 130-residue protein sequence, read N- to C-terminus: Small ribosomal subunit protein uS8 (130 aa).

This sequence belongs to the universal ribosomal protein uS8 family. As to quaternary structure, part of the 30S ribosomal subunit. Contacts proteins S5 and S12.

Its function is as follows. One of the primary rRNA binding proteins, it binds directly to 16S rRNA central domain where it helps coordinate assembly of the platform of the 30S subunit. The sequence is that of Small ribosomal subunit protein uS8 from Onion yellows phytoplasma (strain OY-M).